We begin with the raw amino-acid sequence, 145 residues long: Large ribosomal subunit protein uL11 (145 aa).

It belongs to the universal ribosomal protein uL11 family. In terms of assembly, part of the ribosomal stalk of the 50S ribosomal subunit. Interacts with L10 and the large rRNA to form the base of the stalk. L10 forms an elongated spine to which L12 dimers bind in a sequential fashion forming a multimeric L10(L12)X complex. In terms of processing, one or more lysine residues are methylated.

Functionally, forms part of the ribosomal stalk which helps the ribosome interact with GTP-bound translation factors. This chain is Large ribosomal subunit protein uL11, found in Rickettsia prowazekii (strain Madrid E).